Reading from the N-terminus, the 245-residue chain is Small ribosomal subunit protein uS2 (245 aa).

The protein belongs to the universal ribosomal protein uS2 family.

In Pseudomonas fluorescens (strain Pf0-1), this protein is Small ribosomal subunit protein uS2.